The following is a 196-amino-acid chain: MPIGVPKVPFRSPGEEDAYWVDIYNRLYRERLLFLGQPVASEISNQLIGLMVYLSIEDDTKDLYLFMNSPGGWVLPGIAIYDTMQFVRPDVHTICMGLAASMGSFILAGGEITKRLAFPHARVMIHQPASSFYEAQTGEFVLEAEELLKLRETITRVYVQKTGKPFWVVSEDLERDVFMSATEAQAYGIVDLVAVE.

Residue Ser101 is the Nucleophile of the active site. His126 is an active-site residue.

This sequence belongs to the peptidase S14 family. Component of the chloroplastic Clp protease core complex.

Its subcellular location is the plastid. It localises to the chloroplast stroma. The enzyme catalyses Hydrolysis of proteins to small peptides in the presence of ATP and magnesium. alpha-casein is the usual test substrate. In the absence of ATP, only oligopeptides shorter than five residues are hydrolyzed (such as succinyl-Leu-Tyr-|-NHMec, and Leu-Tyr-Leu-|-Tyr-Trp, in which cleavage of the -Tyr-|-Leu- and -Tyr-|-Trp bonds also occurs).. Its function is as follows. Cleaves peptides in various proteins in a process that requires ATP hydrolysis. Has a chymotrypsin-like activity. Plays a major role in the degradation of misfolded proteins. This is ATP-dependent Clp protease proteolytic subunit from Panax ginseng (Korean ginseng).